A 6629-amino-acid polypeptide reads, in one-letter code: Replicase polyprotein 1ab (6629 aa).

Topologically, residues 1 to 1750 (MASSLKQGVS…VASYKTVLCK (1750 aa)) are cytoplasmic. The region spanning 675 to 780 (KTVTFGETTV…SCHLIYRDYE (106 aa)) is the Ubiquitin-like 1 domain. A disordered region spans residues 783–802 (DDIEEEDAEECDTDSGEAEE). Positions 1003 to 1179 (VKPATCEKPK…YFDVTCKQKT (177 aa)) constitute a Macro domain. Residues 1175-1227 (CKQKTIYLTEDGVKYRSIVLKPGDSLGQFGQVYAKNKIVFTADDVEDKEILYV) enclose the Ubiquitin-like 2 domain. One can recognise a Peptidase C16 domain in the interval 1236-1497 (EYYGLDAQKY…SKSVKEDVSN (262 aa)). Cysteine 1274 acts as the For PL-PRO activity in catalysis. Zn(2+)-binding residues include cysteine 1353, cysteine 1355, cysteine 1387, and cysteine 1390. A C4-type; degenerate zinc finger spans residues 1353–1390 (CNCGIKSYELRGLEACIQPVRATNLLHFKTQYSNCPTC). Catalysis depends on for PL-PRO activity residues histidine 1437 and aspartate 1448. The helical transmembrane segment at 1751–1771 (VVLATLLIVWFVYTSNPVMFT) threads the bilayer. Residues 1751–1864 (VVLATLLIVW…KPVAGFVIIC (114 aa)) are HD1. In terms of domain architecture, 3Ecto spans 1769-1833 (MFTGIRVLDF…AYSVEQVYKD (65 aa)). Over 1772-1843 (GIRVLDFLFE…AASGFIFNWN (72 aa)) the chain is Lumenal. Disulfide bonds link cysteine 1785–cysteine 1811 and cysteine 1802–cysteine 1808. The chain crosses the membrane as a helical span at residues 1844 to 1864 (WLYLVFLILFVKPVAGFVIIC). Residues 1865–2280 (YCVKYLVLNS…TFKCFKSYFK (416 aa)) are Cytoplasmic-facing. The segment at 1911–2001 (YIQVHHILYC…KLKRHVKPTA (91 aa)) is Y1. The region spanning 1911–2263 (YIQVHHILYC…HTQKLLVEKK (353 aa)) is the CoV Nsp3 Y domain. Zn(2+) contacts are provided by histidine 1915, cysteine 1920, cysteine 1925, cysteine 1928, cysteine 1961, histidine 1964, cysteine 1968, and cysteine 1971. A ZF1 region spans residues 1915–1928 (HHILYCKDVTCEVC). The segment at 1961 to 1971 (CKRHNWYCRNC) is ZF2. Positions 2002–2104 (YAYHVVDEAC…ILDQALYEQL (103 aa)) are Y2. Residues 2002 to 2263 (YAYHVVDEAC…HTQKLLVEKK (262 aa)) form a coV-Y region. A Y3 region spans residues 2105–2163 (VVEPVSKSVIDKVCSILSSIISVDTAALNYKAGTLRDALLSITKDEEAVDMAIFCHNHD). Residues 2164–2263 (VDYTGDGFTN…HTQKLLVEKK (100 aa)) are Y4. The helical transmembrane segment at 2281–2301 (WLLIFYILFTACCSGYYYMEV) threads the bilayer. Positions 2281–2664 (WLLIFYILFT…LACCYLGFII (384 aa)) are HD2. Over 2302–2559 (SKSFVHPMYD…FFTGVNPNIY (258 aa)) the chain is Lumenal. Residues 2560-2580 (MQLATMFLILVVVVLIFAMVI) traverse the membrane as a helical segment. Residues 2581 to 2611 (KFQGVFKAYATTVFITMLVWVINAFILCVHS) are Cytoplasmic-facing. Residues 2612-2632 (YNSVLAVILLVLYCYASLVTS) traverse the membrane as a helical segment. Residues 2633 to 2643 (RNTVIIMHCWL) lie on the Lumenal side of the membrane. A helical membrane pass occupies residues 2644 to 2664 (VFTFGLIVPTWLACCYLGFII). The Cytoplasmic segment spans residues 2665 to 3096 (YMYTPLFLWC…SSFVRKATSW (432 aa)). The 96-residue stretch at 2684 to 2779 (LYDGNEFVGN…RYSIGVSRLQ (96 aa)) folds into the Nsp4C domain. The Peptidase C30 domain maps to 2780 to 3086 (SGFKKLVSPS…FNQIGGVRLQ (307 aa)). Residues histidine 2820 and cysteine 2922 each act as for 3CL-PRO activity in the active site. A helical membrane pass occupies residues 3097 to 3117 (FWSRCVLACFLFVLCAIVLFT). The tract at residues 3097–3317 (FWSRCVLACF…WLCTCYFGLY (221 aa)) is HD3. The Lumenal segment spans residues 3118–3121 (AVPL). The chain crosses the membrane as a helical span at residues 3122–3142 (KFYVYAAVILLMAVLFISFTV). At 3143-3151 (KHVMAYMDT) the chain is on the cytoplasmic side. The helical transmembrane segment at 3152-3172 (FLLPTLITVIIGVCAEVPFIY) threads the bilayer. The Lumenal portion of the chain corresponds to 3173–3188 (NTLISQVVIFLSQWYD). Residues 3189–3209 (PVVFDTMVPWMFLPLVLYTAF) form a helical membrane-spanning segment. Over 3210–3257 (KCVQGCYMNSFNTSLLMLYQFVKLGFVIYTSSNTLTAYTEGNWELFFE) the chain is Cytoplasmic. A helical membrane pass occupies residues 3258–3278 (LVHTTVLANVSSNSLIGLFVF). The Lumenal portion of the chain corresponds to 3279-3296 (KCAKWMLYYCNATYLNNY). The helical transmembrane segment at 3297–3317 (VLMAVMVNCIGWLCTCYFGLY) threads the bilayer. Residues 3318-6629 (WWVNKVFGLT…FTSDSFVCTM (3312 aa)) are Cytoplasmic-facing. The RdRp Nsp7 cofactor domain maps to 3380–3462 (AKLSDVKCTT…DILKRSTVLQ (83 aa)). Positions 3463–3672 (SVTQEFSHIP…GHNKVDVVLQ (210 aa)) constitute a RdRp Nsp8 cofactor domain. The region spanning 3673–3783 (NNELMPHGVK…GAISNVVVLQ (111 aa)) is the Nsp9 ssRNA-binding domain. One can recognise an ExoN/MTase coactivator domain in the interval 3785–3926 (KGHETEEVDA…CDSLRQPKSS (142 aa)). Zn(2+) contacts are provided by cysteine 3858, cysteine 3861, histidine 3867, cysteine 3878, cysteine 3904, cysteine 3907, cysteine 3915, and cysteine 3917. Zinc fingers lie at residues 3858–3878 (CLYCRAHIAHPGSVGNLDGRC) and 3904–3917 (CTVCQCWIGYGCQC). A NiRAN domain is found at 3940–4198 (YLNRVRGSSE…APERYFEYDV (259 aa)). In terms of domain architecture, Nsp12 Interface spans 4203–4301 (KSYDLLKYDY…MNQDNTMSFS (99 aa)). Histidine 4232, cysteine 4238, cysteine 4243, cysteine 4247, and cysteine 4424 together coordinate Zn(2+). The 567-residue stretch at 4302-4868 (KMGLSQLMQF…NMYRAPTTLQ (567 aa)) folds into the Nsp12 RNA-dependent RNA polymerase domain. The rdRp Fingers N-ter stretch occupies residues 4304–4517 (GLSQLMQFVG…HQKILKSIVN (214 aa)). Positions 4518 to 4556 (TRNASVVIGTTKFYGGWDNMLRNLIQGVEDPILMGWDYP) are rdRp Palm N-ter. Residues 4548–4710 (PILMGWDYPK…CYNNTLAKQG (163 aa)) enclose the RdRp catalytic domain. The interval 4557-4615 (KCDRAMPNLLRIAASLVLARKHTNCCSWSERIYRLYNECAQVLSETVLATGGIYVKPGG) is rdRp Fingers C-ter. Zn(2+)-binding residues include histidine 4578, cysteine 4581, and cysteine 4582. The tract at residues 4616–4751 (TSSGDATTAY…EKGPHEFCSQ (136 aa)) is rdRp Palm C-ter. Residues serine 4695, aspartate 4696, and aspartate 4697 contribute to the active site. Residues 4752–4868 (HTMLVEVDGE…NMYRAPTTLQ (117 aa)) form a rdRp Thumb region. The CV ZBD domain occupies 4869–4981 (SCGVCVVCNS…DDFNQLATTN (113 aa)). Residues cysteine 4873, cysteine 4876, cysteine 4884, cysteine 4887, cysteine 4894, cysteine 4897, histidine 4901, histidine 4907, cysteine 4918, cysteine 4923, cysteine 4940, and histidine 4943 each contribute to the Zn(2+) site. In terms of domain architecture, (+)RNA virus helicase ATP-binding spans 5125-5305 (MVPECFVNNI…MVCVKPDIFL (181 aa)). 5150-5157 (GPPGSGKS) contacts ATP. The (+)RNA virus helicase C-terminal domain maps to 5306–5477 (AKCYRCPKEI…QGTGLFKICN (172 aa)). The 215-residue stretch at 5539-5753 (MFITRDEAIR…RCLAINNAFC (215 aa)) folds into the ExoN domain. Catalysis depends on residues aspartate 5557, glutamate 5559, and glutamate 5658. Residues cysteine 5674, cysteine 5676, cysteine 5692, histidine 5695, histidine 5723, cysteine 5727, and histidine 5730 each coordinate Zn(2+). Residues histidine 5734 and aspartate 5739 contribute to the active site. Residue cysteine 5745 participates in Zn(2+) binding. Residues 5762–5989 (YPHIANEDEV…NLWKSFSALQ (228 aa)) enclose the N7-MTase domain. Residue 5797 to 5803 (DIGNPKG) participates in S-adenosyl-L-methionine binding. A gpppA-binding region spans residues 5877–5891 (CNGGSLYVNKHAFYT). Cysteine 5915, cysteine 5935, cysteine 5946, and histidine 5949 together coordinate Zn(2+). The Nsp15 N-terminal oligomerization domain occupies 5990–6050 (SIDNIAYNMY…SVAFELYAKR (61 aa)). The 116-residue stretch at 6051 to 6166 (NIRTLPNNRI…VYKRVNGAFV (116 aa)) folds into the AV-Nsp11N/CoV-Nsp15M domain. The 142-residue stretch at 6183 to 6324 (EPRSDIERDF…EDGSIKTCYP (142 aa)) folds into the NendoU domain. Residues histidine 6212, histidine 6227, lysine 6267, lysine 6371, aspartate 6455, lysine 6499, and glutamate 6532 contribute to the active site. Positions 6327–6626 (QSAWTCGYNM…NTSFTSDSFV (300 aa)) constitute a Nidovirus-type SAM-dependent 2'-O-MTase domain.

The protein belongs to the coronaviruses polyprotein 1ab family. Interacts with host PHB and PHB2. As to quaternary structure, interacts with papain-like protease and non-structural protein 6. In terms of assembly, monomer. Homodimer. Only the homodimer shows catalytic activity. Eight copies of nsp7 and eight copies of nsp8 assemble to form a heterohexadecamer dsRNA-encircling ring structure. As to quaternary structure, eight copies of nsp7 and eight copies of nsp8 assemble to form a heterohexadecamer dsRNA-encircling ring structure. Interacts with ORF6 protein. In terms of assembly, homodimer. Homododecamer. Interacts with proofreading exoribonuclease nsp14 and 2'-O-methyltransferase nsp16; these interactions enhance nsp14 and nsp16 enzymatic activities. As to quaternary structure, interacts with host DDX1 (via C-terminus). Interacts with non-structural protein 10. In terms of assembly, homohexamer. Interacts with non-structural protein 10. It depends on Mn(2+) as a cofactor. Zn(2+) serves as cofactor. In terms of processing, specific enzymatic cleavages in vivo by its own proteases yield mature proteins. 3C-like proteinase nsp5 liberates nsps 6-16 from the polyprotein. Papain-like and 3C-like proteinases are autocatalytically processed. Post-translationally, N-glycosylated.

Its subcellular location is the host endoplasmic reticulum membrane. It localises to the host cytoplasm. The protein resides in the host perinuclear region. It is found in the host endoplasmic reticulum. The protein localises to the host endoplasmic reticulum-Golgi intermediate compartment. The catalysed reaction is Thiol-dependent hydrolysis of ester, thioester, amide, peptide and isopeptide bonds formed by the C-terminal Gly of ubiquitin (a 76-residue protein attached to proteins as an intracellular targeting signal).. The enzyme catalyses RNA(n) + a ribonucleoside 5'-triphosphate = RNA(n+1) + diphosphate. It catalyses the reaction ATP + H2O = ADP + phosphate + H(+). It carries out the reaction uridylyl-uridylyl-ribonucleotide-RNA = a 3'-end uridylyl-2',3'-cyclophospho-uridine-RNA + a 5'-end dephospho-ribonucleoside-RNA. The catalysed reaction is a 5'-end diphospho-ribonucleoside in mRNA + GTP + H(+) = a 5'-end (5'-triphosphoguanosine)-ribonucleoside in mRNA + diphosphate. The enzyme catalyses a 5'-end (N(7)-methyl 5'-triphosphoguanosine)-ribonucleoside in mRNA + S-adenosyl-L-methionine = a 5'-end (N(7)-methyl 5'-triphosphoguanosine)-(2'-O-methyl-ribonucleoside) in mRNA + S-adenosyl-L-homocysteine + H(+). In terms of biological role, multifunctional protein involved in the transcription and replication of viral RNAs. Contains the proteinases responsible for the cleavages of the polyprotein. Functionally, may play a role in the modulation of host cell survival signaling pathway by interacting with host PHB and PHB2. Indeed, these two proteins play a role in maintaining the functional integrity of the mitochondria and protecting cells from various stresses. Responsible for the cleavages located at the N-terminus of the replicase polyprotein. In addition, PL-PRO possesses a deubiquitinating/deISGylating activity and processes both 'Lys-48'- and 'Lys-63'-linked polyubiquitin chains from cellular substrates. Its function is as follows. Plays a role in host membrane rearrangement that leads to creation of cytoplasmic double-membrane vesicles (DMV) necessary for viral replication. Alone is able to induce paired membranes. Coexpression of nsp3 and nsp4 does not result in the formation of DMVs. In terms of biological role, responsible for the majority of cleavages as it cleaves the C-terminus of replicase polyprotein at 11 sites. Recognizes substrates containing the core sequence [ILMVF]-Q-|-[SGACN]. Inhibited by the substrate-analog Cbz-Val-Asn-Ser-Thr-Leu-Gln-CMK. Functionally, forms a hexadecamer with nsp8 (8 subunits of each) that may participate in viral replication by acting as a primase. Alternatively, may synthesize substantially longer products than oligonucleotide primers. Forms a hexadecamer with nsp7 (8 subunits of each) that may participate in viral replication by acting as a primase. Alternatively, may synthesize substantially longer products than oligonucleotide primers. Its function is as follows. Forms a primer, NSP9-pU, which is utilized by the polymerase for the initiation of RNA chains. Interacts with ribosome signal recognition particle RNA (SRP). Together with NSP8, suppress protein integration into the cell membrane, thereby disrupting host immune defenses. In terms of biological role, plays a pivotal role in viral transcription by stimulating both nsp14 3'-5' exoribonuclease and nsp16 2'-O-methyltransferase activities. Therefore plays an essential role in viral mRNAs cap methylation. Functionally, RNA-directed RNA polymerase that catalyzes the transcription of viral genomic and subgenomic RNAs. Acts in complex with nsp7 and nsp8 to transcribe both the minus and positive strands of genomic RNA. The kinase-like NiRAN domain of NSP12 attaches one or more nucleotides to the amino terminus of NSP9, forming a covalent RNA-protein intermediate that serves as transcription/replication primer. Subgenomic RNAs (sgRNAs) are formed by discontinuous transcription: The polymerase has the ability to pause at transcription-regulating sequences (TRS) and jump to the leader TRS, resulting in a major deletion. This creates a series of subgenomic RNAs that are replicated, transcribed and translated. In addition, Nsp12 is a subunit of the viral RNA capping enzyme that catalyzes the RNA guanylyltransferase reaction for genomic and sub-genomic RNAs. Subsequently, the NiRAN domain transfers RNA to GDP, and forms the core cap structure GpppA-RNA. Multi-functional protein with a zinc-binding domain in N-terminus displaying RNA and DNA duplex-unwinding activities with 5' to 3' polarity. Activity of helicase is dependent on magnesium. Its function is as follows. Enzyme possessing two different activities: an exoribonuclease activity acting on both ssRNA and dsRNA in a 3' to 5' direction and a N7-guanine methyltransferase activity. Acts as a proofreading exoribonuclease for RNA replication, thereby lowering The sensitivity of the virus to RNA mutagens. In terms of biological role, plays a role in viral transcription/replication and prevents the simultaneous activation of host cell dsRNA sensors, such as MDA5/IFIH1, OAS, and PKR. Acts by degrading the 5'-polyuridines generated during replication of the poly(A) region of viral genomic and subgenomic RNAs. Catalyzes a two-step reaction in which a 2'3'-cyclic phosphate (2'3'-cP) is first generated by 2'-O transesterification, which is then hydrolyzed to a 3'-phosphate (3'-P). If not degraded, poly(U) RNA would hybridize with poly(A) RNA tails and activate host dsRNA sensors. Functionally, methyltransferase that mediates mRNA cap 2'-O-ribose methylation to the 5'-cap structure of viral mRNAs. N7-methyl guanosine cap is a prerequisite for binding of nsp16. Therefore plays an essential role in viral mRNAs cap methylation which is essential to evade immune system. This chain is Replicase polyprotein 1ab (rep), found in Gallus gallus (Chicken).